A 411-amino-acid polypeptide reads, in one-letter code: Na(+)-translocating NADH-quinone reductase subunit F (411 aa).

A helical membrane pass occupies residues 5–25 (VILALGIAAFTVIVLVLVAII). A 2Fe-2S ferredoxin-type domain is found at 36–130 (GDITIDINDD…NMEVELPEEI (95 aa)). Positions 73, 79, 82, and 114 each coordinate [2Fe-2S] cluster. The FAD-binding FR-type domain occupies 133 to 273 (VKKWECTVIS…SGPFGEFFAK (141 aa)).

Belongs to the NqrF family. In terms of assembly, composed of six subunits; NqrA, NqrB, NqrC, NqrD, NqrE and NqrF. It depends on [2Fe-2S] cluster as a cofactor. FAD is required as a cofactor.

Its subcellular location is the cell inner membrane. The catalysed reaction is a ubiquinone + n Na(+)(in) + NADH + H(+) = a ubiquinol + n Na(+)(out) + NAD(+). In terms of biological role, NQR complex catalyzes the reduction of ubiquinone-1 to ubiquinol by two successive reactions, coupled with the transport of Na(+) ions from the cytoplasm to the periplasm. The first step is catalyzed by NqrF, which accepts electrons from NADH and reduces ubiquinone-1 to ubisemiquinone by a one-electron transfer pathway. This is Na(+)-translocating NADH-quinone reductase subunit F from Haemophilus influenzae (strain PittGG).